Reading from the N-terminus, the 75-residue chain is Small ribosomal subunit protein bS18 (75 aa).

An N-acetylalanine modification is found at Ala2.

It belongs to the bacterial ribosomal protein bS18 family. In terms of assembly, part of the 30S ribosomal subunit. Forms a tight heterodimer with protein bS6.

Its function is as follows. Binds as a heterodimer with protein bS6 to the central domain of the 16S rRNA, where it helps stabilize the platform of the 30S subunit. In Salmonella typhimurium (strain LT2 / SGSC1412 / ATCC 700720), this protein is Small ribosomal subunit protein bS18 (rpsR).